A 288-amino-acid chain; its full sequence is Acetyl-coenzyme A carboxylase carboxyl transferase subunit beta (288 aa).

Positions 32 to 288 (LFAKCPACKH…LELHTEVENV (257 aa)) constitute a CoA carboxyltransferase N-terminal domain. Cys36, Cys39, Cys54, and Cys57 together coordinate Zn(2+). Residues 36–57 (CPACKHTIYQKDLGKNKVCPNC) form a C4-type zinc finger.

The protein belongs to the AccD/PCCB family. Acetyl-CoA carboxylase is a heterohexamer composed of biotin carboxyl carrier protein (AccB), biotin carboxylase (AccC) and two subunits each of ACCase subunit alpha (AccA) and ACCase subunit beta (AccD). Zn(2+) is required as a cofactor.

The protein resides in the cytoplasm. The catalysed reaction is N(6)-carboxybiotinyl-L-lysyl-[protein] + acetyl-CoA = N(6)-biotinyl-L-lysyl-[protein] + malonyl-CoA. Its pathway is lipid metabolism; malonyl-CoA biosynthesis; malonyl-CoA from acetyl-CoA: step 1/1. Functionally, component of the acetyl coenzyme A carboxylase (ACC) complex. Biotin carboxylase (BC) catalyzes the carboxylation of biotin on its carrier protein (BCCP) and then the CO(2) group is transferred by the transcarboxylase to acetyl-CoA to form malonyl-CoA. The protein is Acetyl-coenzyme A carboxylase carboxyl transferase subunit beta of Lactococcus lactis subsp. cremoris (strain MG1363).